A 421-amino-acid chain; its full sequence is Phosphatidate cytidylyltransferase 1 (421 aa).

Position 1 is an N-acetylmethionine (Met1). A compositionally biased stretch (polar residues) spans 1 to 12; the sequence is MEEENVTSSPST. The disordered stretch occupies residues 1–26; the sequence is MEEENVTSSPSTPVHRLRHRRRSNEV. Helical transmembrane passes span 60–80, 102–122, 149–169, 183–203, 206–226, 246–266, 321–341, and 369–389; these read IGGFVLVVYMGHLYITAMVVV, LPYIKQLNWHFFFTAMLFVYG, YHMAICYLLYIIGFMWFILTL, WTHMILIVVFTQSSFTVANIF, IFWFLLPASLIIINDIFAYIF, GFIGASVTTIISAFVLANILG, LCLGLFASIIAPFGGFFASGF, and VMAVFAYIYLQSFIVSQSVSV.

This sequence belongs to the CDS family. Requires Mg(2+) as cofactor.

The protein resides in the membrane. The catalysed reaction is a 1,2-diacyl-sn-glycero-3-phosphate + CTP + H(+) = a CDP-1,2-diacyl-sn-glycerol + diphosphate. It participates in phospholipid metabolism; CDP-diacylglycerol biosynthesis; CDP-diacylglycerol from sn-glycerol 3-phosphate: step 3/3. Its function is as follows. May be involved in the synthesis of minor phospholipids and in modulation of IP3-mediated signal transduction. The sequence is that of Phosphatidate cytidylyltransferase 1 from Arabidopsis thaliana (Mouse-ear cress).